Reading from the N-terminus, the 311-residue chain is Cytosolic Fe-S cluster assembly factor Nubp1 homolog (311 aa).

Residues Cys-9, Cys-23, Cys-26, and Cys-32 each contribute to the [4Fe-4S] cluster site. ATP is bound at residue 63-70; it reads GKGGVGKS. Residues Cys-240 and Cys-243 each contribute to the [4Fe-4S] cluster site.

This sequence belongs to the Mrp/NBP35 ATP-binding proteins family. NUBP1/NBP35 subfamily. As to quaternary structure, heterotetramer of 2 Nubp1 and 2 Nubp2 chains. [4Fe-4S] cluster serves as cofactor.

It localises to the cytoplasm. Component of the cytosolic iron-sulfur (Fe/S) protein assembly (CIA) machinery. Required for maturation of extramitochondrial Fe-S proteins. The Nubp1-Nubp2 heterotetramer forms a Fe-S scaffold complex, mediating the de novo assembly of an Fe-S cluster and its transfer to target apoproteins. This chain is Cytosolic Fe-S cluster assembly factor Nubp1 homolog, found in Drosophila erecta (Fruit fly).